Consider the following 434-residue polypeptide: Methylenetetrahydrofolate--tRNA-(uracil-5-)-methyltransferase TrmFO (434 aa).

Residue 10–15 coordinates FAD; the sequence is GAGLAG.

Belongs to the MnmG family. TrmFO subfamily. FAD is required as a cofactor.

It is found in the cytoplasm. The enzyme catalyses uridine(54) in tRNA + (6R)-5,10-methylene-5,6,7,8-tetrahydrofolate + NADH + H(+) = 5-methyluridine(54) in tRNA + (6S)-5,6,7,8-tetrahydrofolate + NAD(+). It catalyses the reaction uridine(54) in tRNA + (6R)-5,10-methylene-5,6,7,8-tetrahydrofolate + NADPH + H(+) = 5-methyluridine(54) in tRNA + (6S)-5,6,7,8-tetrahydrofolate + NADP(+). Functionally, catalyzes the folate-dependent formation of 5-methyl-uridine at position 54 (M-5-U54) in all tRNAs. In Bacillus cereus (strain G9842), this protein is Methylenetetrahydrofolate--tRNA-(uracil-5-)-methyltransferase TrmFO.